The following is a 356-amino-acid chain: Poly(rC)-binding protein 1 (356 aa).

Position 1 is an N-acetylmethionine (methionine 1). KH domains lie at 13–75 (TLTI…FAMI) and 97–162 (PVTL…VKQI). Residue lysine 115 forms a Glycyl lysine isopeptide (Lys-Gly) (interchain with G-Cter in SUMO2) linkage. Phosphoserine is present on residues serine 173, serine 189, serine 190, serine 246, serine 264, and serine 273. The KH 3 domain occupies 279-343 (QTTHELTIPN…ASISLAQYLI (65 aa)).

Post-translationally, phosphorylated; lowers poly(rC)-binding activity.

The protein localises to the nucleus. Its subcellular location is the cytoplasm. Its function is as follows. Single-stranded nucleic acid binding protein that binds preferentially to oligo dC. Together with PCBP2, required for erythropoiesis, possibly by regulating mRNA splicing. The polypeptide is Poly(rC)-binding protein 1 (PCBP1) (Bos taurus (Bovine)).